Reading from the N-terminus, the 188-residue chain is MKKIGVLAIQGAVDEHIQMIESAGALAFKVKHSNDLAGLDGLVLPGGESTTMRKIMKRYDLMEPVKAFAKEGKAIFGTCAGLVLLSKEIEGGEESLGLLDATAIRNGFGRQKESFEAELSVDVFDAPTFEAIFIRAPYLIEPSDEVTVLATIDGKIVAAKQANILVTAFHPELTNDNRWMRYFLEKIL.

47-49 (GES) provides a ligand contact to L-glutamine. Cys79 acts as the Nucleophile in catalysis. L-glutamine is bound by residues Arg105 and 134 to 135 (IR). Active-site charge relay system residues include His170 and Glu172.

The protein belongs to the glutaminase PdxT/SNO family. In the presence of PdxS, forms a dodecamer of heterodimers. Only shows activity in the heterodimer.

The enzyme catalyses aldehydo-D-ribose 5-phosphate + D-glyceraldehyde 3-phosphate + L-glutamine = pyridoxal 5'-phosphate + L-glutamate + phosphate + 3 H2O + H(+). It catalyses the reaction L-glutamine + H2O = L-glutamate + NH4(+). It functions in the pathway cofactor biosynthesis; pyridoxal 5'-phosphate biosynthesis. In terms of biological role, catalyzes the hydrolysis of glutamine to glutamate and ammonia as part of the biosynthesis of pyridoxal 5'-phosphate. The resulting ammonia molecule is channeled to the active site of PdxS. The protein is Pyridoxal 5'-phosphate synthase subunit PdxT of Listeria monocytogenes serotype 4a (strain HCC23).